Reading from the N-terminus, the 419-residue chain is MDIALSSDALDVSFHPDEGVHQIAVGLISGKVQLFDYGAMFHNQSTQPDESRTSGKAYRRVWSVRPSHKSCRGVAFDASGSNLFCIFKDKSIIALDPSDGHVKARWPRAHESAPSRILPIHEGLMATGDDDGIVRLWDPRCPPEGDAEAKPLRSYDHHSDWITDMLWCTHLDPPRSKKKDQEDDLKRKRDEERARSRLIVTSGDGTLSVIDIHGGKKGVEVSEDQEDELLSIASIKNGKKLVVGTQLGVLSLWAPDRGLLDHADRFPGHPSSVDALCTLDQDTVLTGSSDGLIRVVQLFPHKLLGIVGDHGGMPIECMKRKGHLIASIGHGNECKLTDLAPLLEEGDVETDAAEPEPAVMLVSDEAHLIARSADGSDESAGESDVMQPPPATKRRTAKSKAGKKSVHDVDQHASFFADL.

WD repeat units lie at residues 4-45 (ALSS…HNQS), 66-105 (PSHKSCRGVAFDASGSNLFCIFKDKSIIALDPSDGHVKAR), 108-147 (RAHESAPSRILPIHEGLMATGDDDGIVRLWDPRCPPEGDA), 180-220 (DQED…KGVE), 224-263 (DQEDELLSIASIKNGKKLVVGTQLGVLSLWAPDRGLLDHA), 268-308 (GHPS…GIVG), and 351-390 (DAAEPEPAVMLVSDEAHLIARSADGSDESAGESDVMQPPP). The tract at residues 172–192 (DPPRSKKKDQEDDLKRKRDEE) is disordered. A disordered region spans residues 372–408 (SADGSDESAGESDVMQPPPATKRRTAKSKAGKKSVHD). The span at 392-404 (TKRRTAKSKAGKK) shows a compositional bias: basic residues.

Belongs to the WD repeat WDR55 family.

The protein resides in the nucleus. Its subcellular location is the nucleolus. The chain is WD repeat-containing protein JIP5 (JIP5) from Malassezia globosa (strain ATCC MYA-4612 / CBS 7966) (Dandruff-associated fungus).